The chain runs to 591 residues: Aspartate--tRNA(Asp/Asn) ligase (591 aa).

E174 contacts L-aspartate. The tract at residues 198-201 is aspartate; it reads QLFK. R220 is a binding site for L-aspartate. ATP contacts are provided by residues 220-222 and Q229; that span reads RDE. Position 450 (H450) interacts with L-aspartate. E483 is a binding site for ATP. R490 is a binding site for L-aspartate. Residue 535-538 coordinates ATP; that stretch reads GLDR.

The protein belongs to the class-II aminoacyl-tRNA synthetase family. Type 1 subfamily. In terms of assembly, homodimer.

It localises to the cytoplasm. It catalyses the reaction tRNA(Asx) + L-aspartate + ATP = L-aspartyl-tRNA(Asx) + AMP + diphosphate. Aspartyl-tRNA synthetase with relaxed tRNA specificity since it is able to aspartylate not only its cognate tRNA(Asp) but also tRNA(Asn). Reaction proceeds in two steps: L-aspartate is first activated by ATP to form Asp-AMP and then transferred to the acceptor end of tRNA(Asp/Asn). This is Aspartate--tRNA(Asp/Asn) ligase from Pseudomonas putida (strain GB-1).